A 189-amino-acid polypeptide reads, in one-letter code: Elongation factor P (189 aa).

At Lys-35 the chain carries N6-(3,6-diaminohexanoyl)-5-hydroxylysine.

This sequence belongs to the elongation factor P family. In terms of processing, may be beta-lysylated on the epsilon-amino group of Lys-35 by the combined action of EpmA and EpmB, and then hydroxylated on the C5 position of the same residue by EpmC (if this protein is present). Lysylation is critical for the stimulatory effect of EF-P on peptide-bond formation. The lysylation moiety may extend toward the peptidyltransferase center and stabilize the terminal 3-CCA end of the tRNA. Hydroxylation of the C5 position on Lys-35 may allow additional potential stabilizing hydrogen-bond interactions with the P-tRNA.

It is found in the cytoplasm. It participates in protein biosynthesis; polypeptide chain elongation. Functionally, involved in peptide bond synthesis. Alleviates ribosome stalling that occurs when 3 or more consecutive Pro residues or the sequence PPG is present in a protein, possibly by augmenting the peptidyl transferase activity of the ribosome. Modification of Lys-35 is required for alleviation. This chain is Elongation factor P, found in Wigglesworthia glossinidia brevipalpis.